A 319-amino-acid polypeptide reads, in one-letter code: Ciliary microtubule inner protein 2A (319 aa).

This sequence belongs to the CIMIP2 family. In terms of assembly, microtubule inner protein component of sperm flagellar doublet microtubules.

The protein resides in the cytoplasm. It localises to the cytoskeleton. The protein localises to the flagellum axoneme. Functionally, microtubule inner protein (MIP) part of the dynein-decorated doublet microtubules (DMTs) in flagellum axoneme. Binds to the intra-tubulin interfaces. This chain is Ciliary microtubule inner protein 2A (Cimip2a), found in Mus musculus (Mouse).